The following is a 473-amino-acid chain: Cysteine--tRNA ligase (473 aa).

Cys-30 is a binding site for Zn(2+). The short motif at 32-42 (MTVYDYCHIGH) is the 'HIGH' region element. Residues Cys-213, His-238, and Glu-242 each contribute to the Zn(2+) site. The 'KMSKS' region signature appears at 270–274 (KMSKS). Lys-273 is a binding site for ATP.

Belongs to the class-I aminoacyl-tRNA synthetase family. Monomer. Zn(2+) serves as cofactor.

It localises to the cytoplasm. The catalysed reaction is tRNA(Cys) + L-cysteine + ATP = L-cysteinyl-tRNA(Cys) + AMP + diphosphate. The polypeptide is Cysteine--tRNA ligase (Acinetobacter baumannii (strain AB307-0294)).